The chain runs to 507 residues: Cysteine--tRNA ligase (507 aa).

Cysteine 29 provides a ligand contact to Zn(2+). Positions proline 31–asparagine 41 match the 'HIGH' region motif. The Zn(2+) site is built by cysteine 207, histidine 232, and glutamate 236. The 'KMSKS' region signature appears at lysine 265–serine 269. An ATP-binding site is contributed by lysine 268.

The protein belongs to the class-I aminoacyl-tRNA synthetase family. In terms of assembly, monomer. Zn(2+) is required as a cofactor.

It localises to the cytoplasm. The enzyme catalyses tRNA(Cys) + L-cysteine + ATP = L-cysteinyl-tRNA(Cys) + AMP + diphosphate. The chain is Cysteine--tRNA ligase from Neorickettsia sennetsu (strain ATCC VR-367 / Miyayama) (Ehrlichia sennetsu).